The primary structure comprises 688 residues: MADQLSSGMGNLSIDQQPPSGPQMGGQGQMRRSYIPPHLRGKMGDAAPPMAGPNGLNNSAWAGNNNYDARGPGGGGNWPAPGGPPGPGFEGQQGAGWGGPRPQGGFNPNAYRGNAGAGAGAGAGGGGGSFSNRGSGDGQWRDGKHIPGPANPRVERELFGTPDDPSKQHTGINFEKYDDIPVEASGDNVPEPVLTFSNPPLDNHLISNIQLARYNVPTPVQKYSIPIVMGGRDLMACAQTGSGKTGGFLFPILSQSFHTGPSPIPASAAGAYGRQRKAYPTALILAPTRELVSQIYDEARKFAYRSWVRPCVVYGGADIGSQLRQIERGCDLLVATPGRLVDLIERGRISLCNIKYLVLDEADRMLDMGFEPQIRRIVEGEDMPKVNDRQTLMFSATFPRDIQILARDFLKDYIFLSVGRVGSTSENITQKVEYVEDIDKRSVLLDILHTHAGGLTLIFVETKRMADSLSDFLINQNFPATSIHGDRTQRERERALEMFRNGRCPILVATAVAARGLDIPNVTHVINYDLPTDIDDYVHRIGRTGRAGNTGIATAFFNRGNRGVVRELLELLKEANQEVPAFLETIARESSFGGGRGGRGGGRGGGRGRTQTADYRKFGGSGGGGFGGGFGGAPASGGYGGGGYGGGGPPAGGYGGGGGAGYGGGGGGGGYGGGGYGNPGGAGGQSWW.

2 stretches are compositionally biased toward polar residues: residues 1–15 (MADQ…LSID) and 55–67 (GLNN…NNNY). Residues 1–170 (MADQLSSGMG…TPDDPSKQHT (170 aa)) are disordered. Residues 88-102 (GFEGQQGAGWGGPRP) are compositionally biased toward gly residues. A compositionally biased stretch (low complexity) spans 103-114 (QGGFNPNAYRGN). Residues 115 to 129 (AGAGAGAGAGGGGGS) are compositionally biased toward gly residues. A Q motif motif is present at residues 194 to 222 (LTFSNPPLDNHLISNIQLARYNVPTPVQK). The region spanning 225-416 (IPIVMGGRDL…RDFLKDYIFL (192 aa)) is the Helicase ATP-binding domain. 238–245 (AQTGSGKT) lines the ATP pocket. Positions 360-363 (DEAD) match the DEAD box motif. The Helicase C-terminal domain maps to 427-587 (NITQKVEYVE…EVPAFLETIA (161 aa)). Residues 590–615 (SSFGGGRGGRGGGRGGGRGRTQTADY) form a disordered region. The segment covering 592 to 608 (FGGGRGGRGGGRGGGRG) has biased composition (gly residues).

This sequence belongs to the DEAD box helicase family. DDX3/DED1 subfamily.

It is found in the cytoplasm. The catalysed reaction is ATP + H2O = ADP + phosphate + H(+). In terms of biological role, ATP-binding RNA helicase involved in translation initiation. Remodels RNA in response to ADP and ATP concentrations by facilitating disruption, but also formation of RNA duplexes. The polypeptide is ATP-dependent RNA helicase ded1 (drh-9) (Neurospora crassa (strain ATCC 24698 / 74-OR23-1A / CBS 708.71 / DSM 1257 / FGSC 987)).